Reading from the N-terminus, the 206-residue chain is Ion-translocating oxidoreductase complex subunit G (206 aa).

Residues 9–29 (GITLALFAAGSTGLTAAINQM) traverse the membrane as a helical segment. At threonine 174 the chain carries FMN phosphoryl threonine.

This sequence belongs to the RnfG family. In terms of assembly, the complex is composed of six subunits: RsxA, RsxB, RsxC, RsxD, RsxE and RsxG. It depends on FMN as a cofactor.

It is found in the cell inner membrane. Its function is as follows. Part of a membrane-bound complex that couples electron transfer with translocation of ions across the membrane. Required to maintain the reduced state of SoxR. Probably transfers electron from NAD(P)H to SoxR. The polypeptide is Ion-translocating oxidoreductase complex subunit G (Escherichia coli (strain K12)).